A 711-amino-acid chain; its full sequence is Taperin (711 aa).

Disordered regions lie at residues 134–305, 328–384, and 414–438; these read SRLL…APKP, RNSF…LGKS, and QRPSSPPPFLPAASEEAEPAEGLRV. Residues 157 to 180 show a composition bias toward pro residues; sequence PPPPPPPPAPPRPPPAAPSPPAAP. A compositionally biased stretch (polar residues) spans 197–206; the sequence is LQKTGSNSFT. At Ser-241 the chain carries Phosphoserine. Residues 267-282 are compositionally biased toward low complexity; sequence TPSATPASPPASATPS. A compositionally biased stretch (polar residues) spans 283–296; it reads QRQCVSAATSTNDS. A phosphoserine mark is found at Ser-362, Ser-418, and Ser-463. Disordered stretches follow at residues 500–535, 572–630, 642–662, and 674–711; these read TFTVVPKRKPGTLQDQHFSQANREPRPREAEEEEAS, SRKK…EKPF, SVRPESSRLPEGSSGLSSYTP, and QALEQAPREAEPPPVEAMLTPASQNDLSDFRSEPALYF. Polar residues-rich tracts occupy residues 512–521 and 581–590; these read LQDQHFSQAN and NDKSLQTTFE. Over residues 597–624 the composition is skewed to acidic residues; sequence LEQEEEVDQQEEEEEEEEEEEEEEEGSG.

The protein belongs to the taperin family. Interacts with GRXCR2; the interaction restricts TPRN to the stereocilum basal region. Interacts with actin ACTB; the interaction may stabilize stereocilia. Interacts with CLIC5. Interacts with PTPRQ. TPRN, CLIC5 and PTPQR form concentric rings at the base of stereocilia and may form a complex. Interacts with phosphatase PPP1CA; the interaction results in inhibition of PPC1A phosphatase activity. Interacts with DNA damage response proteins XRCC6/KU70, XRCC5/KU80, PARP1, TOP1 and TOP2A; these interactions recruit TPRN to sites of DNA damage where it may play a role in DNA repair. As to expression, expression is detected in fetal cochlea.

It localises to the cell projection. It is found in the stereocilium. The protein resides in the microvillus. Its subcellular location is the nucleus. The protein localises to the nucleoplasm. It localises to the cytoplasm. Its function is as follows. Essential for hearing. Required for maintenance of stereocilia on both inner and outer hair cells. Necessary for the integrity of the stereociliary rootlet. May act as an actin cytoskeleton regulator involved in the regulation of actin dynamics at the pointed end in hair cells. Forms rings at the base of stereocilia and binds actin filaments in the stereocilia which may stabilize the stereocilia. Acts as a strong inhibitor of PPP1CA phosphatase activity. Recruited to sites of DNA damage and may play a role in DNA damage repair. The chain is Taperin (TPRN) from Homo sapiens (Human).